Here is a 421-residue protein sequence, read N- to C-terminus: 5-hydroxytryptamine receptor 2 (421 aa).

Residues 1-21 are Extracellular-facing; the sequence is MLCGRLRHTMNSTTCFFSHRT. N-linked (GlcNAc...) asparagine glycosylation occurs at N11. Residues 22–42 traverse the membrane as a helical segment; it reads VLIGIVGSLIIAVSVVGNVLV. At 43 to 59 the chain is on the cytoplasmic side; sequence CLAIFTEPILSHSKSKF. Residues 60 to 79 traverse the membrane as a helical segment; sequence FIVSLAVADLLLALLVMTFA. The Extracellular portion of the chain corresponds to 80 to 95; that stretch reads LVNSLYGYWLFGETFC. Cysteines 95 and 210 form a disulfide. A helical transmembrane segment spans residues 96 to 118; the sequence is FIWMSADVMCETASIFSICVISY. Over 119-138 the chain is Cytoplasmic; the sequence is NRLKQVQKPLQYEEFMTTTR. Residues 139–160 form a helical membrane-spanning segment; sequence ALLIIASLWICSFVVSFVPFFL. At 161 to 213 the chain is on the extracellular side; the sequence is EWHELSMEEIKTIFKDLISDKVKTSDAHTFSFALEQTLGDNRTSNPKPECLFD. Residues 214 to 234 form a helical membrane-spanning segment; that stretch reads VHFIYSVIYSLFCFYIPCTLM. The Cytoplasmic segment spans residues 235 to 274; that stretch reads LRNYLRLFLIAKKHHVRIKNLHRLHRNQGTQGSKAARTLT. Residues 275–295 traverse the membrane as a helical segment; sequence IITGTFLACWLPFFIINPIEA. At 296–304 the chain is on the extracellular side; sequence VDEHLIPLE. A helical membrane pass occupies residues 305–325; sequence CFMVTIWLGYFNSCVNPIIYG. Residues 326 to 421 lie on the Cytoplasmic side of the membrane; it reads TSNSKFRAAF…MLSESDTVFS (96 aa).

This sequence belongs to the G-protein coupled receptor 1 family. In terms of tissue distribution, central nervous system.

The protein resides in the cell membrane. In terms of biological role, this is one of the several different receptors for 5-hydroxytryptamine (serotonin). 5-HT plays important roles in various behavioral and physiological processes in aplysia. These include feeding, locomotion, circadian rhythm, learning and memory, synaptic plasticity, and synaptic growth. This receptor is mediated by G proteins that stimulate phospholipase C. This chain is 5-hydroxytryptamine receptor 2 (5HTB2), found in Aplysia californica (California sea hare).